The sequence spans 37 residues: Delta/kappa-conotoxin Mo3964 (37 aa).

Intrachain disulfides connect cysteine 4/cysteine 12, cysteine 11/cysteine 27, and cysteine 21/cysteine 34.

In terms of tissue distribution, expressed by the venom duct.

The protein localises to the secreted. This toxin reduces the outward currents that are due to the opening of voltage-gated potassium channels in DRG neurons. In addition, leftward shift in the presence of this toxin is observed in averaged normalized conductance-voltage plot of outward sodium currents (Nav1.2/SCN2A). This chain is Delta/kappa-conotoxin Mo3964, found in Conus monile (Necklace cone).